The following is a 200-amino-acid chain: Octanoyltransferase (200 aa).

The BPL/LPL catalytic domain occupies 27 to 200 (GAEDDQLWLV…WAELFSARWR (174 aa)). Residues 66–73 (RGGQITYH), 134–136 (SLG), and 147–149 (GIA) contribute to the substrate site. The active-site Acyl-thioester intermediate is the cysteine 165.

The protein belongs to the LipB family.

It localises to the cytoplasm. It carries out the reaction octanoyl-[ACP] + L-lysyl-[protein] = N(6)-octanoyl-L-lysyl-[protein] + holo-[ACP] + H(+). Its pathway is protein modification; protein lipoylation via endogenous pathway; protein N(6)-(lipoyl)lysine from octanoyl-[acyl-carrier-protein]: step 1/2. In terms of biological role, catalyzes the transfer of endogenously produced octanoic acid from octanoyl-acyl-carrier-protein onto the lipoyl domains of lipoate-dependent enzymes. Lipoyl-ACP can also act as a substrate although octanoyl-ACP is likely to be the physiological substrate. In Dichelobacter nodosus (strain VCS1703A), this protein is Octanoyltransferase.